Reading from the N-terminus, the 178-residue chain is Actin-related protein 2/3 complex subunit 3-A (178 aa).

The protein belongs to the ARPC3 family. As to quaternary structure, component of the Arp2/3 complex composed of actr2/arp2, actr3/arp3, arpc1 (arpc1a or arpc1b), arpc2, arpc3, arpc4 and arpc5.

It localises to the cytoplasm. The protein localises to the cytoskeleton. It is found in the cell projection. The protein resides in the nucleus. Its function is as follows. Component of the Arp2/3 complex, a multiprotein complex that mediates actin polymerization upon stimulation by nucleation-promoting factor (NPF). The Arp2/3 complex mediates the formation of branched actin networks in the cytoplasm, providing the force for cell motility. In addition to its role in the cytoplasmic cytoskeleton, the Arp2/3 complex also promotes actin polymerization in the nucleus, thereby regulating gene transcription and repair of damaged DNA. The Arp2/3 complex promotes homologous recombination (HR) repair in response to DNA damage by promoting nuclear actin polymerization, leading to drive motility of double-strand breaks (DSBs). The sequence is that of Actin-related protein 2/3 complex subunit 3-A (arpc3-a) from Xenopus laevis (African clawed frog).